The following is a 264-amino-acid chain: 3-methyl-2-oxobutanoate hydroxymethyltransferase (264 aa).

Mg(2+) contacts are provided by Asp44 and Asp83. 3-methyl-2-oxobutanoate contacts are provided by residues 44–45 (DS), Asp83, and Lys112. Glu114 contributes to the Mg(2+) binding site. Glu181 (proton acceptor) is an active-site residue.

It belongs to the PanB family. In terms of assembly, homodecamer; pentamer of dimers. Mg(2+) serves as cofactor.

The protein localises to the cytoplasm. The catalysed reaction is 3-methyl-2-oxobutanoate + (6R)-5,10-methylene-5,6,7,8-tetrahydrofolate + H2O = 2-dehydropantoate + (6S)-5,6,7,8-tetrahydrofolate. The protein operates within cofactor biosynthesis; coenzyme A biosynthesis. Catalyzes the reversible reaction in which hydroxymethyl group from 5,10-methylenetetrahydrofolate is transferred onto alpha-ketoisovalerate to form ketopantoate. The protein is 3-methyl-2-oxobutanoate hydroxymethyltransferase of Pyrobaculum arsenaticum (strain DSM 13514 / JCM 11321 / PZ6).